Reading from the N-terminus, the 39-residue chain is Photosystem II reaction center protein J (39 aa).

A helical membrane pass occupies residues 9–29; that stretch reads LWLVATVGGIAVITVLGIFIY.

Belongs to the PsbJ family. In terms of assembly, PSII is composed of 1 copy each of membrane proteins PsbA, PsbB, PsbC, PsbD, PsbE, PsbF, PsbH, PsbI, PsbJ, PsbK, PsbL, PsbM, PsbT, PsbX, PsbY, PsbZ, Psb30/Ycf12, at least 3 peripheral proteins of the oxygen-evolving complex and a large number of cofactors. It forms dimeric complexes.

The protein localises to the plastid. It localises to the chloroplast thylakoid membrane. Its function is as follows. One of the components of the core complex of photosystem II (PSII). PSII is a light-driven water:plastoquinone oxidoreductase that uses light energy to abstract electrons from H(2)O, generating O(2) and a proton gradient subsequently used for ATP formation. It consists of a core antenna complex that captures photons, and an electron transfer chain that converts photonic excitation into a charge separation. In Gracilaria tenuistipitata var. liui (Red alga), this protein is Photosystem II reaction center protein J.